Here is a 61-residue protein sequence, read N- to C-terminus: UPF0434 protein PA14_25520 (61 aa).

This sequence belongs to the UPF0434 family.

This chain is UPF0434 protein PA14_25520, found in Pseudomonas aeruginosa (strain UCBPP-PA14).